Here is a 113-residue protein sequence, read N- to C-terminus: Protein TrbJ (113 aa).

In Escherichia coli (strain K12), this protein is Protein TrbJ (trbJ).